Consider the following 146-residue polypeptide: uncharacterized protein (146 aa).

The HTH marR-type domain maps to 1 to 137; sequence MLSQEFFNSF…TINVMNQIHE (137 aa).

This is an uncharacterized protein from Staphylococcus aureus (strain MRSA252).